Consider the following 472-residue polypeptide: Meiotic spindle formation protein mei-1 (472 aa).

The interval 83 to 161 (HEAMTRQSGS…TQGILPQNSA (79 aa)) is disordered. The residue at position 92 (Ser92) is a Phosphoserine; by mbk-2. Composition is skewed to polar residues over residues 134–143 (KSTSSMSTNP) and 150–161 (NPTQGILPQNSA). Residues 233 to 240 (GPPGTGKT) and 351 to 352 (RR) each bind ATP.

The protein belongs to the AAA ATPase family. Katanin p60 subunit A1 subfamily. In terms of assembly, homohexamer; ATP hydrolysis initiates a cycle between an open spiral and a closed ring conformation which is probably involved in pulling tubulin dimers out from microtubules. Interacts with mei-2, which may serve as a targeting subunit. Interacts with mel-26, which targets mei-1 for ubiquitin mediated proteolysis. Interacts with phosphatase pph-4.1. In terms of processing, phosphorylated. Phosphorylation by mbk-2 is required for its rapid degradation following meiosis II. Likely dephosphorylated by the PP4 complex composed of catalytic subunit pph-4.1 and regulatory subunit ppfr-1. Post-translationally, polyubiquitination targets the protein for rapid degradation via the ubiquitin system at the end of meiosis. The BTB domain protein mel-26 may serve to specifically target mei-1 for ubiquitination by cul-3 containing complexes. The cul-3 protein is in turn regulated by neddylation by ned-8.

The protein localises to the cytoplasm. It is found in the cytoskeleton. The protein resides in the spindle pole. It localises to the chromosome. It catalyses the reaction n ATP + n H2O + a microtubule = n ADP + n phosphate + (n+1) alpha/beta tubulin heterodimers.. ATPase activity is stimulated by microtubules, which promote homooligomerization. ATP-dependent microtubule severing is stimulated by interaction with mei-2. In terms of biological role, catalytic subunit of a complex which severs microtubules in an ATP-dependent manner. Microtubule severing may promote rapid reorganization of cellular microtubule arrays. Required specifically for meiotic spindle formation in the female germline; the presence of this protein is inimical to the formation of mitotic spindles. In body wall muscles, regulates organization of myosin thick filaments. This is Meiotic spindle formation protein mei-1 from Caenorhabditis elegans.